A 373-amino-acid chain; its full sequence is RNA 3'-terminal phosphate cyclase-like protein (373 aa).

Belongs to the RNA 3'-terminal cyclase family. Type 2 subfamily. As to quaternary structure, part of the small subunit (SSU) processome, composed of more than 70 proteins and the RNA chaperone small nucleolar RNA (snoRNA) U3. Interacts with BMS1.

The protein localises to the nucleus. Its subcellular location is the nucleolus. Functionally, as part of the small subunit (SSU) processome, it plays a role in 40S-ribosomal-subunit biogenesis in the early pre-rRNA processing steps at sites A0, A1 and A2 that are required for proper maturation of the 18S RNA. Activates BMS1 by promoting GDP/GTP exchange. Does not have cyclase activity. In Bos taurus (Bovine), this protein is RNA 3'-terminal phosphate cyclase-like protein (RCL1).